Reading from the N-terminus, the 291-residue chain is U3 small nucleolar ribonucleoprotein protein IMP4 (291 aa).

The region spanning 83 to 264 is the Brix domain; sequence PKVMITTSRD…LYMIRLGTLE (182 aa).

Part of the small subunit (SSU) processome, composed of more than 70 proteins and the RNA chaperone small nucleolar RNA (snoRNA) U3. Component of a heterotrimeric complex containing IMP3, IMP4 and MPHOSPH10. Interacts with MPHOSPH10.

Its subcellular location is the nucleus. The protein resides in the nucleolus. Functionally, component of the 60-80S U3 small nucleolar ribonucleoprotein (U3 snoRNP). Required for the early cleavages during pre-18S ribosomal RNA processing. Part of the small subunit (SSU) processome, first precursor of the small eukaryotic ribosomal subunit. During the assembly of the SSU processome in the nucleolus, many ribosome biogenesis factors, an RNA chaperone and ribosomal proteins associate with the nascent pre-rRNA and work in concert to generate RNA folding, modifications, rearrangements and cleavage as well as targeted degradation of pre-ribosomal RNA by the RNA exosome. The chain is U3 small nucleolar ribonucleoprotein protein IMP4 from Homo sapiens (Human).